Reading from the N-terminus, the 142-residue chain is Large ribosomal subunit protein uL11 (142 aa).

This sequence belongs to the universal ribosomal protein uL11 family. In terms of assembly, part of the ribosomal stalk of the 50S ribosomal subunit. Interacts with L10 and the large rRNA to form the base of the stalk. L10 forms an elongated spine to which L12 dimers bind in a sequential fashion forming a multimeric L10(L12)X complex. One or more lysine residues are methylated.

In terms of biological role, forms part of the ribosomal stalk which helps the ribosome interact with GTP-bound translation factors. This is Large ribosomal subunit protein uL11 from Shigella boydii serotype 18 (strain CDC 3083-94 / BS512).